The following is a 557-amino-acid chain: Leucine-rich glioma-inactivated protein 1 (557 aa).

Residues 1–34 form the signal peptide; that stretch reads MESERSKRMGNACIPLKRIAYFLCLLSALLLTEG. One can recognise an LRRNT domain in the interval 35-72; sequence KKPAKPKCPAVCTCTKDNALCENARSIPRTVPPDVISL. LRR repeat units follow at residues 92–113, 116–137, and 140–161; these read SLQLLLFTSNSFDVISDDAFIG, HLEYLFIENNNIKSISRHTFRG, and SLIHLSLANNNLQTLPKDIFKG. Residues 173–223 enclose the LRRCT domain; the sequence is NSFNCDCKLKWLVEWLGHTNATVEDIYCEGPPEYKKRKINSLSSKDFDCII. Asparagine 192 is a glycosylation site (N-linked (GlcNAc...) asparagine). 7 EAR repeats span residues 225–267, 271–313, 317–364, 366–415, 419–462, 464–506, and 510–552; these read EFAK…EWDH, TFRN…KRDS, KFIK…KWNG, GFYS…QWNK, LFTN…KWGG, SFQD…NWDA, and KFVK…KHVI. Asparagine 277 carries an N-linked (GlcNAc...) asparagine glycan. An N-linked (GlcNAc...) asparagine glycan is attached at asparagine 422.

Oligomer. Interacts with KCNA1 within a complex containing KCNA1, KCNA4 and KCNAB1. Part of a complex containing ADAM22, DLG4/PSD95 and CACNG2 (stargazin). Can bind to ADAM11 and ADAM23. Post-translationally, glycosylated.

The protein localises to the secreted. Its subcellular location is the synapse. The protein resides in the cytoplasm. Its function is as follows. Regulates voltage-gated potassium channels assembled from KCNA1, KCNA4 and KCNAB1. It slows down channel inactivation by precluding channel closure mediated by the KCNAB1 subunit. Ligand for ADAM22 that positively regulates synaptic transmission mediated by AMPA-type glutamate receptors. Plays a role in suppressing the production of MMP1/3 through the phosphatidylinositol 3-kinase/ERK pathway. The sequence is that of Leucine-rich glioma-inactivated protein 1 (LGI1) from Pongo abelii (Sumatran orangutan).